A 340-amino-acid polypeptide reads, in one-letter code: Diacylglycerol acyltransferase/mycolyltransferase Ag85C (340 aa).

Residues M1–G45 form the signal peptide. L86–R87 is a substrate binding site. The fibronectin-binding stretch occupies residues F102–V112. The substrate site is built by S170 and N198. Residue S170 is the Nucleophile of the active site. The active site involves E274. Substrate-binding positions include L276 to R279 and H306 to W308. H306 is an active-site residue.

It belongs to the mycobacterial A85 antigen family. Homodimer.

The protein localises to the secreted. It carries out the reaction an acyl-CoA + a 1,2-diacyl-sn-glycerol = a triacyl-sn-glycerol + CoA. The enzyme catalyses 2 alpha,alpha'-trehalose 6-mycolate = alpha,alpha'-trehalose 6,6'-bismycolate + alpha,alpha-trehalose. Functionally, the antigen 85 proteins (FbpA, FbpB, FbpC) are responsible for the high affinity of mycobacteria to fibronectin, a large adhesive glycoprotein, which facilitates the attachment of M.tuberculosis to murine alveolar macrophages (AMs). They also help to maintain the integrity of the cell wall by catalyzing the transfer of mycolic acids to cell wall arabinogalactan and through the synthesis of alpha,alpha-trehalose dimycolate (TDM, cord factor). They catalyze the transfer of a mycoloyl residue from one molecule of alpha,alpha-trehalose monomycolate (TMM) to another TMM, leading to the formation of TDM. The polypeptide is Diacylglycerol acyltransferase/mycolyltransferase Ag85C (fbpC) (Mycobacterium bovis (strain ATCC BAA-935 / AF2122/97)).